Here is a 213-residue protein sequence, read N- to C-terminus: Large ribosomal subunit protein uL1 (213 aa).

The protein belongs to the universal ribosomal protein uL1 family. As to quaternary structure, part of the 50S ribosomal subunit.

Functionally, binds directly to 23S rRNA. Probably involved in E site tRNA release. Its function is as follows. Protein L1 is also a translational repressor protein, it controls the translation of its operon by binding to its mRNA. The polypeptide is Large ribosomal subunit protein uL1 (Methanocella arvoryzae (strain DSM 22066 / NBRC 105507 / MRE50)).